The following is a 601-amino-acid chain: Glutamine--fructose-6-phosphate aminotransferase [isomerizing] (601 aa).

Cys2 functions as the Nucleophile; for GATase activity in the catalytic mechanism. In terms of domain architecture, Glutamine amidotransferase type-2 spans 2–218 (CGIVGYIGYD…DHEIVIVKKD (217 aa)). SIS domains lie at 284 to 423 (IIND…EHGR) and 453 to 591 (IATD…VDKP). The For Fru-6P isomerization activity role is filled by Lys596.

Homodimer.

The protein resides in the cytoplasm. The catalysed reaction is D-fructose 6-phosphate + L-glutamine = D-glucosamine 6-phosphate + L-glutamate. Functionally, catalyzes the first step in hexosamine metabolism, converting fructose-6P into glucosamine-6P using glutamine as a nitrogen source. The chain is Glutamine--fructose-6-phosphate aminotransferase [isomerizing] from Staphylococcus aureus (strain COL).